The chain runs to 333 residues: Transcription factor MYB36 (333 aa).

HTH myb-type domains lie at 9–62 (KANV…LNYL) and 63–117 (RPNI…KKKL). DNA-binding regions (H-T-H motif) lie at residues 38-62 (WIAL…LNYL) and 90-113 (WSII…NTKL). A disordered region spans residues 119–150 (GRQKQMNRQDSITDSTENNLSNNNNNKSPQNL). Residues 122 to 135 (KQMNRQDSITDSTE) are compositionally biased toward polar residues. Residues 136-150 (NNLSNNNNNKSPQNL) show a composition bias toward low complexity.

In terms of tissue distribution, expressed in leaves, roots (endodermis-specific) and seedlings.

It is found in the nucleus. Transcription factors that activates genes required for endodermal differentiation but represses genes involved in proliferative divisions, thus regulating the transition from proliferation to differentiation in root endodermis. Required for Casparian strip formation by positively regulating the expression of the Casparian strip genes CASP1, PER64 and ESB1 and other endodermis-specific genes, thus triggering correct localized lignin biosynthesis in root endodermis and subsequently regulating global ion homeostasis. The protein is Transcription factor MYB36 of Arabidopsis thaliana (Mouse-ear cress).